The following is a 398-amino-acid chain: Inositol polyphosphate 5-phosphatase (398 aa).

It belongs to the inositol 1,4,5-trisphosphate 5-phosphatase type II family. As to expression, expressed in tail, cilia, dendrites, axon and male head.

The protein localises to the cytoplasm. Dephosphorylates a number of phosphatidylinositols. Controls the cellular levels and subcellular distribution of phosphatidylinositol 3,5-bisphosphate and phosphatidylinositol 3,4,5-trisphosphate. Has a role in sperm activation and motility. Influences the localization of the transient receptor potential polycystin (TRPP) complex proteins lov-1 and pkd-2. This Caenorhabditis elegans protein is Inositol polyphosphate 5-phosphatase.